The primary structure comprises 558 residues: CTP synthase (558 aa).

Positions 1 to 267 (MAKFVFVTGG…CLEMLDVLNL (267 aa)) are amidoligase domain. Serine 13 is a binding site for CTP. Residue serine 13 coordinates UTP. Residues 14–19 (SIGKGI) and aspartate 71 contribute to the ATP site. Residues aspartate 71 and glutamate 141 each contribute to the Mg(2+) site. CTP contacts are provided by residues 148–150 (DIE), 188–193 (KTKPTQ), and lysine 224. UTP-binding positions include 188–193 (KTKPTQ) and lysine 224. Residues 292 to 534 (KVALVGKYVQ…IEAAQLRLPA (243 aa)) form the Glutamine amidotransferase type-1 domain. Position 354 (glycine 354) interacts with L-glutamine. Catalysis depends on cysteine 381, which acts as the Nucleophile; for glutamine hydrolysis. L-glutamine contacts are provided by residues 382-385 (LGMQ), glutamate 405, and arginine 462. Active-site residues include histidine 507 and glutamate 509. The tract at residues 536-558 (PDEALRRQSQTNISAQEKPSRIG) is disordered. The span at 542 to 552 (RQSQTNISAQE) shows a compositional bias: polar residues.

Belongs to the CTP synthase family. As to quaternary structure, homotetramer.

It carries out the reaction UTP + L-glutamine + ATP + H2O = CTP + L-glutamate + ADP + phosphate + 2 H(+). The enzyme catalyses L-glutamine + H2O = L-glutamate + NH4(+). The catalysed reaction is UTP + NH4(+) + ATP = CTP + ADP + phosphate + 2 H(+). It participates in pyrimidine metabolism; CTP biosynthesis via de novo pathway; CTP from UDP: step 2/2. Allosterically activated by GTP, when glutamine is the substrate; GTP has no effect on the reaction when ammonia is the substrate. The allosteric effector GTP functions by stabilizing the protein conformation that binds the tetrahedral intermediate(s) formed during glutamine hydrolysis. Inhibited by the product CTP, via allosteric rather than competitive inhibition. In terms of biological role, catalyzes the ATP-dependent amination of UTP to CTP with either L-glutamine or ammonia as the source of nitrogen. Regulates intracellular CTP levels through interactions with the four ribonucleotide triphosphates. The protein is CTP synthase of Prochlorococcus marinus (strain MIT 9303).